Here is a 366-residue protein sequence, read N- to C-terminus: Glucan organizing enzyme 1 (366 aa).

Residues 1–24 (MLPLWARGGKPIVIPLPQKRHITL) lie on the Extracellular side of the membrane. The helical transmembrane segment at 25–45 (PALPILLLLLGTGFLLHSLFF) threads the bilayer. The Cytoplasmic portion of the chain corresponds to 46–366 (PPPPPHPPGK…ETYKKWKRGH (321 aa)).

Belongs to the glycosyltransferase 32 family.

The protein localises to the cell membrane. In terms of biological role, plays a role in the localization of glycogen rosettes to the plasma membrane. Required for correct cell wall organization and may facilitate the connection between beta-1,3-glucan and beta-1,6-glucan in the cell wall. The sequence is that of Glucan organizing enzyme 1 from Cryptococcus neoformans var. grubii serotype A (strain H99 / ATCC 208821 / CBS 10515 / FGSC 9487) (Filobasidiella neoformans var. grubii).